A 1035-amino-acid chain; its full sequence is MGFFFSTRKGLLLIIFICLDIFGSNAQLLPEDEVQTLRTIFRKLQNQTVNIERTSCLDRKWNFVAESTSKLPTSNITCDCTFNASSVCRVTNIQLRGFNLRGIIPPEFGNLTRLTEIDLVLNFLSGTIPTTLSQIPLEILAVTGNRLSGPFPPQLGQITTLTDVIMESNLFTGQLPPNLGNLRSLKRLLISSNNITGRIPESLSNLKNLTNFRIDGNSLSGKIPDFIGNWTRLVRLDLQGTSMEGPIPASISNLKNLTELRITDLRGPTSPFPDLQNMTNMERLVLRNCLIREPIPEYIGTSMTMLKLLDLSSNMLNGTIPDTFRSLNAFNFMYLNNNSLTGPVPQFILDSKQNIDLSYNNFTQPPTLSCNQLDVNLISSYPSVTNNSVQWCLRKDLPCPGDAHHSSLFINCGGNRLKVDKDEYADDLNKRGASTFSSVSERWGYSSSGAWLGNDGATYLATDTFNLINESTPEYYKTARLASQSLKYYGLCMRRGSYKVQLYFAEIMFSNDQTYSSLGRRLFDIYVQGILLERDFNIAQRAGGVGKPFLRQVDEVQVNGSTLEIHLKWTGKGTNVIPTRGVYGPLISAITVTPNFKVDTGKPLSNGVVAGIVIAACVAFGLLVLVILRLTGYLGGKEVDENEELRGLDLQTGSFTLKQIKRATNNFDPENKIGEGGFGPVYKGVLADGMTIAVKQLSSKSKQGNREFVTEIGMISALQHPNLVKLYGCCIEGKELLLVYEYLENNSLARALFGTEKQRLHLDWSTRNKVCIGIAKGLAYLHEESRLKIVHRDIKATNVLLDLSLNAKISDFGLAKLDEEENTHISTRIAGTIGYMAPEYAMRGYLTDKADVYSFGVVCLEIVSGKSNTNYRPKEEFIYLLDWAYVLQEQGSLLELVDPDLGTSFSKKEAMRMLNIALLCTNPSPTLRPPMSSVVSMLQGKIKVQPPLVKREADPSGSAAMRFKALEHLSQDSESQVSTYTRNKEHKSSSSMDGPWVDSSFSDPSKDVSLLQQEEGNSSSSSRRLLDDLTDVEIE.

The first 26 residues, 1–26, serve as a signal peptide directing secretion; sequence MGFFFSTRKGLLLIIFICLDIFGSNA. Residues 27–607 are Extracellular-facing; that stretch reads QLLPEDEVQT…VDTGKPLSNG (581 aa). N46, N75, N83, and N110 each carry an N-linked (GlcNAc...) asparagine glycan. LRR repeat units lie at residues 87–110, 111–135, 137–158, 160–182, 183–206, 208–232, and 234–254; these read VCRVTNIQLRGFNLRGIIPPEFGN, LTRLTEIDLVLNFLSGTIPTTLSQI, LEILAVTGNRLSGPFPPQLGQI, TLTDVIMESNLFTGQLPPNLGNL, RSLKRLLISSNNITGRIPESLSNL, NLTNFRIDGNSLSGKIPDFIGNWTR, and VRLDLQGTSMEGPIPASISNL. Residues N194, N208, and N229 are each glycosylated (N-linked (GlcNAc...) asparagine). 2 N-linked (GlcNAc...) asparagine glycosylation sites follow: N256 and N277. LRR repeat units follow at residues 278–302, 303–326, 328–349, and 350–372; these read MTNMERLVLRNCLIREPIPEYIGTS, MTMLKLLDLSSNMLNGTIPDTFRS, NAFNFMYLNNNSLTGPVPQFIL, and DSKQNIDLSYNNFTQPPTLSCNQ. N-linked (GlcNAc...) asparagine glycans are attached at residues N317, N337, N361, N386, N469, and N559. A helical membrane pass occupies residues 608 to 628; that stretch reads VVAGIVIAACVAFGLLVLVIL. At 629-1035 the chain is on the cytoplasmic side; that stretch reads RLTGYLGGKE…LDDLTDVEIE (407 aa). Phosphothreonine is present on T656. In terms of domain architecture, Protein kinase spans 667–948; sequence FDPENKIGEG…QGKIKVQPPL (282 aa). ATP-binding positions include 673 to 681 and K695; that span reads IGEGGFGPV. Y740 is subject to Phosphotyrosine. The active-site Proton acceptor is the D793. S826 is modified (phosphoserine). A phosphothreonine mark is found at T827 and T832. The residue at position 840 (Y840) is a Phosphotyrosine. Positions 969-1035 are disordered; it reads LSQDSESQVS…LDDLTDVEIE (67 aa). Residues 972-981 are compositionally biased toward polar residues; the sequence is DSESQVSTYT. A compositionally biased stretch (low complexity) spans 1009–1023; the sequence is SLLQQEEGNSSSSSR.

It belongs to the protein kinase superfamily. Ser/Thr protein kinase family.

Its subcellular location is the cell membrane. It carries out the reaction L-seryl-[protein] + ATP = O-phospho-L-seryl-[protein] + ADP + H(+). It catalyses the reaction L-threonyl-[protein] + ATP = O-phospho-L-threonyl-[protein] + ADP + H(+). This chain is Probable LRR receptor-like serine/threonine-protein kinase At1g53440, found in Arabidopsis thaliana (Mouse-ear cress).